Consider the following 300-residue polypeptide: Protoheme IX farnesyltransferase (300 aa).

Transmembrane regions (helical) follow at residues 24–44 (VTQL…PGMV), 46–66 (WHVL…AFAI), 94–114 (PQIL…LYTF), 118–138 (LTMW…TLLL), 146–166 (IVIG…AVTG), 172–192 (AWIL…VLAL), 217–237 (LHIL…FISG), 239–259 (SGAV…AYAW), and 278–298 (IVYL…RPLL).

It belongs to the UbiA prenyltransferase family. Protoheme IX farnesyltransferase subfamily.

The protein resides in the cell inner membrane. The catalysed reaction is heme b + (2E,6E)-farnesyl diphosphate + H2O = Fe(II)-heme o + diphosphate. The protein operates within porphyrin-containing compound metabolism; heme O biosynthesis; heme O from protoheme: step 1/1. In terms of biological role, converts heme B (protoheme IX) to heme O by substitution of the vinyl group on carbon 2 of heme B porphyrin ring with a hydroxyethyl farnesyl side group. The polypeptide is Protoheme IX farnesyltransferase (Burkholderia cenocepacia (strain HI2424)).